Reading from the N-terminus, the 117-residue chain is Large ribosomal subunit protein eL18 (117 aa).

This sequence belongs to the eukaryotic ribosomal protein eL18 family.

This is Large ribosomal subunit protein eL18 from Archaeoglobus fulgidus (strain ATCC 49558 / DSM 4304 / JCM 9628 / NBRC 100126 / VC-16).